A 262-amino-acid chain; its full sequence is Ribosomal RNA small subunit methyltransferase A (262 aa).

S-adenosyl-L-methionine contacts are provided by histidine 19, leucine 21, glycine 44, glutamate 65, aspartate 90, and asparagine 109. The interval 218-246 (LPNNLPGPLRERAEEALAGLGHGPDARAE) is disordered.

Belongs to the class I-like SAM-binding methyltransferase superfamily. rRNA adenine N(6)-methyltransferase family. RsmA subfamily.

It localises to the cytoplasm. It carries out the reaction adenosine(1518)/adenosine(1519) in 16S rRNA + 4 S-adenosyl-L-methionine = N(6)-dimethyladenosine(1518)/N(6)-dimethyladenosine(1519) in 16S rRNA + 4 S-adenosyl-L-homocysteine + 4 H(+). Its function is as follows. Specifically dimethylates two adjacent adenosines (A1518 and A1519) in the loop of a conserved hairpin near the 3'-end of 16S rRNA in the 30S particle. May play a critical role in biogenesis of 30S subunits. The polypeptide is Ribosomal RNA small subunit methyltransferase A (Rubrobacter xylanophilus (strain DSM 9941 / JCM 11954 / NBRC 16129 / PRD-1)).